A 220-amino-acid polypeptide reads, in one-letter code: Urease accessory protein UreF (220 aa).

It belongs to the UreF family. UreD, UreF and UreG form a complex that acts as a GTP-hydrolysis-dependent molecular chaperone, activating the urease apoprotein by helping to assemble the nickel containing metallocenter of UreC. The UreE protein probably delivers the nickel.

Its subcellular location is the cytoplasm. In terms of biological role, required for maturation of urease via the functional incorporation of the urease nickel metallocenter. The sequence is that of Urease accessory protein UreF from Bordetella parapertussis (strain 12822 / ATCC BAA-587 / NCTC 13253).